Reading from the N-terminus, the 259-residue chain is Bidirectional sugar transporter SWEET6a (259 aa).

Residues 1-9 (MISPDAARN) are Extracellular-facing. A helical transmembrane segment spans residues 10–30 (VVGIIGNVISFGLFLAPVPTF). One can recognise a MtN3/slv 1 domain in the interval 10 to 98 (VVGIIGNVIS…IFFLYSPNKK (89 aa)). The Cytoplasmic segment spans residues 31 to 45 (WRICKRKDVEEFKAD). A helical membrane pass occupies residues 46 to 66 (PYLATLLNCMLWVFYGIPVVH). Over 67–69 (PNS) the chain is Extracellular. The helical transmembrane segment at 70-90 (ILVVTINGIGLLVEGTYLLIF) threads the bilayer. Residues 91–103 (FLYSPNKKRLRMC) lie on the Cytoplasmic side of the membrane. Residues 104–124 (AVLGVELVFMLAVILGVLLGA) form a helical membrane-spanning segment. Residues 125–131 (HTHEKRS) are Extracellular-facing. The chain crosses the membrane as a helical span at residues 132–152 (MIVGILCVFFGSIMYFSPLTI). Positions 133-216 (IVGILCVFFG…LILYACYYRT (84 aa)) constitute a MtN3/slv 2 domain. Residues 153–165 (MGKVIKTKSVEYM) lie on the Cytoplasmic side of the membrane. Residues 166–186 (PFFLSLVCFLNGVCWTAYALI) form a helical membrane-spanning segment. At 187–189 (RFD) the chain is on the extracellular side. Residues 190–210 (IYVTIPNGLGALFGAIQLILY) traverse the membrane as a helical segment. Residues 211–259 (ACYYRTTPKKTKAAKDVEMPSVVVSGTGAAAAAGGGNTGGGSISVTVER) lie on the Cytoplasmic side of the membrane.

This sequence belongs to the SWEET sugar transporter family. Forms homooligomers and/or heterooligomers.

Its subcellular location is the cell membrane. Functionally, mediates both low-affinity uptake and efflux of sugar across the plasma membrane. This chain is Bidirectional sugar transporter SWEET6a (SWEET6A), found in Oryza sativa subsp. indica (Rice).